The following is a 1033-amino-acid chain: Probable LRR receptor-like serine/threonine-protein kinase At1g56140 (1033 aa).

Residues 1-28 (MLRLWRYLCLLLTVWFLCNFGPVYVVRA) form the signal peptide. Residues 29–636 (QNRTGATTHP…PSKGKSMTGT (608 aa)) lie on the Extracellular side of the membrane. N-linked (GlcNAc...) asparagine glycans are attached at residues N30, N60, and N94. 13 LRR repeats span residues 97-121 (ICRI…LWTL), 122-145 (EYLT…LGNL), 147-169 (RMRW…IGLL), 170-193 (TDLR…IGRC), 195-217 (KLQQ…FANL), 241-264 (WTKL…SFSN), 265-288 (LTSL…FIKD), 289-313 (MKSL…IGEY), 314-337 (SSLR…LFNL), 339-361 (QLTH…KGQS), 363-382 (SNVD…WVSL), 383-406 (PNLN…VLSG), and 422-445 (IYSD…VFER). N-linked (GlcNAc...) asparagine glycosylation is present at N144. A glycan (N-linked (GlcNAc...) asparagine) is linked at N181. 3 N-linked (GlcNAc...) asparagine glycosylation sites follow: N264, N280, and N301. N-linked (GlcNAc...) asparagine glycans are attached at residues N347 and N351. N393 is a glycosylation site (N-linked (GlcNAc...) asparagine). Residue N579 is glycosylated (N-linked (GlcNAc...) asparagine). Residues 637–657 (IVGVIVGVGLLSIISGVVIFI) form a helical membrane-spanning segment. Over 658 to 1033 (IRKRRKRYTD…MLGAQMNEGR (376 aa)) the chain is Cytoplasmic. Position 682 is a phosphothreonine (T682). Residues 693–951 (FDPSNKLGEG…LCTQTSHALR (259 aa)) enclose the Protein kinase domain. Residues 699 to 707 (LGEGGFGPV) and K721 contribute to the ATP site. The residue at position 766 (Y766) is a Phosphotyrosine. D817 (proton acceptor) is an active-site residue. Residues S821 and S850 each carry the phosphoserine modification. Residues T851 and T856 each carry the phosphothreonine modification. At Y864 the chain carries Phosphotyrosine. The segment at 1012 to 1033 (SEISPRNNDARPMLGAQMNEGR) is disordered.

This sequence belongs to the protein kinase superfamily. Ser/Thr protein kinase family.

The protein resides in the membrane. The catalysed reaction is L-seryl-[protein] + ATP = O-phospho-L-seryl-[protein] + ADP + H(+). It carries out the reaction L-threonyl-[protein] + ATP = O-phospho-L-threonyl-[protein] + ADP + H(+). This Arabidopsis thaliana (Mouse-ear cress) protein is Probable LRR receptor-like serine/threonine-protein kinase At1g56140.